A 357-amino-acid chain; its full sequence is MSVSTASTEMSVRKIAAHMKSNPNAKVIFMVGAGISTSCGIPDFRSPGTGLYHNLARLKLPYPEAVFDVDFFQSDPLPFYTLAKELYPGNFRPSKFHYLLKLFQDKDVLKRVYTQNIDTLERQAGVKDDLIIEAHGSFAHCHCIGCGKVYPPQVFKSKLAEHPIKDFVKCDVCGELVKPAIVFFGEDLPDSFSETWLNDSEWLREKITTSGKHPQQPLVIVVGTSLAVYPFASLPEEIPRKVKRVLCNLETVGDFKANKRPTDLIVHQYSDEFAEQLVEELGWQEDFEKILTAQGGMGDNSKEQLLEIVHDLENLSLDQSEHESADKKDKKLQRLNGHDSDEDGASNSSSSQKAAKE.

Residue serine 2 is modified to N-acetylserine. Residues 5–284 (TASTEMSVRK…EQLVEELGWQ (280 aa)) enclose the Deacetylase sirtuin-type domain. NAD(+) is bound by residues 32-52 (GAGI…TGLY) and 115-118 (QNID). The Proton acceptor role is filled by histidine 135. Zn(2+) is bound by residues cysteine 143, cysteine 146, cysteine 170, and cysteine 173. NAD(+) is bound by residues 223–225 (GTS), 248–250 (NLE), and serine 270. The span at 317-329 (LDQSEHESADKKD) shows a compositional bias: basic and acidic residues. The interval 317-357 (LDQSEHESADKKDKKLQRLNGHDSDEDGASNSSSSQKAAKE) is disordered. Serine 340 carries the phosphoserine modification.

This sequence belongs to the sirtuin family. Class I subfamily. As to quaternary structure, homotrimer. Monomer. Homotrimeric in its unliganded state. Undergoes a trimer-monomer transition upon acetyl-lysine substrate binding. The cofactor is Zn(2+).

The protein resides in the cytoplasm. Its subcellular location is the nucleus. It carries out the reaction N(6)-acetyl-L-lysyl-[protein] + NAD(+) + H2O = 2''-O-acetyl-ADP-D-ribose + nicotinamide + L-lysyl-[protein]. With respect to regulation, inhibited by ADP-ribose and nicotinamide. Its function is as follows. NAD-dependent histone deacetylase that is involved in nuclear silencing events. Derepresses subtelomeric silencing and increases repression in nucleolar (rDNA) silencing. Its function is negatively regulated by active nuclear export. The polypeptide is NAD-dependent protein deacetylase HST2 (HST2) (Saccharomyces cerevisiae (strain ATCC 204508 / S288c) (Baker's yeast)).